A 303-amino-acid polypeptide reads, in one-letter code: Acetylglutamate kinase (303 aa).

Residues Gly73–Gly74, Arg95, and Asn194 each bind substrate.

This sequence belongs to the acetylglutamate kinase family. ArgB subfamily.

The protein resides in the cytoplasm. The catalysed reaction is N-acetyl-L-glutamate + ATP = N-acetyl-L-glutamyl 5-phosphate + ADP. It functions in the pathway amino-acid biosynthesis; L-arginine biosynthesis; N(2)-acetyl-L-ornithine from L-glutamate: step 2/4. Catalyzes the ATP-dependent phosphorylation of N-acetyl-L-glutamate. The polypeptide is Acetylglutamate kinase (Saccharopolyspora erythraea (strain ATCC 11635 / DSM 40517 / JCM 4748 / NBRC 13426 / NCIMB 8594 / NRRL 2338)).